Here is a 274-residue protein sequence, read N- to C-terminus: Malonyl-[acyl-carrier protein] O-methyltransferase (274 aa).

The protein belongs to the methyltransferase superfamily.

It catalyses the reaction malonyl-[ACP] + S-adenosyl-L-methionine = malonyl-[ACP] methyl ester + S-adenosyl-L-homocysteine. It functions in the pathway cofactor biosynthesis; biotin biosynthesis. Converts the free carboxyl group of a malonyl-thioester to its methyl ester by transfer of a methyl group from S-adenosyl-L-methionine (SAM). It allows to synthesize pimeloyl-ACP via the fatty acid synthetic pathway. The protein is Malonyl-[acyl-carrier protein] O-methyltransferase of Bacteroides helcogenes (strain ATCC 35417 / DSM 20613 / JCM 6297 / CCUG 15421 / P 36-108).